The chain runs to 494 residues: Protein DETOXIFICATION 21 (494 aa).

Ala2 is subject to N-acetylalanine. A run of 12 helical transmembrane segments spans residues Leu40–Ile60, Leu73–Ala95, Ile123–Leu143, Ile158–Met178, Ile188–Met208, Gly217–Val237, Gly268–Leu288, Ala297–Ala317, Leu340–Leu360, Leu384–Gly404, Leu416–Leu436, and Val441–Leu461.

This sequence belongs to the multi antimicrobial extrusion (MATE) (TC 2.A.66.1) family.

Its subcellular location is the membrane. This Arabidopsis thaliana (Mouse-ear cress) protein is Protein DETOXIFICATION 21.